The primary structure comprises 331 residues: Anthranilate phosphoribosyltransferase (331 aa).

5-phospho-alpha-D-ribose 1-diphosphate-binding positions include Gly-79, Gly-82 to Asp-83, Ser-87, Asn-89 to Thr-92, Lys-107 to Ser-115, and Ser-119. Gly-79 is a binding site for anthranilate. Mg(2+) is bound at residue Ser-91. Asn-110 serves as a coordination point for anthranilate. Position 165 (Arg-165) interacts with anthranilate. Mg(2+) contacts are provided by Asp-223 and Glu-224.

This sequence belongs to the anthranilate phosphoribosyltransferase family. Homodimer. The cofactor is Mg(2+).

The catalysed reaction is N-(5-phospho-beta-D-ribosyl)anthranilate + diphosphate = 5-phospho-alpha-D-ribose 1-diphosphate + anthranilate. The protein operates within amino-acid biosynthesis; L-tryptophan biosynthesis; L-tryptophan from chorismate: step 2/5. Its function is as follows. Catalyzes the transfer of the phosphoribosyl group of 5-phosphorylribose-1-pyrophosphate (PRPP) to anthranilate to yield N-(5'-phosphoribosyl)-anthranilate (PRA). In Buchnera aphidicola subsp. Baizongia pistaciae (strain Bp), this protein is Anthranilate phosphoribosyltransferase.